A 1103-amino-acid chain; its full sequence is MAEAELHKERLQAIAEKRKRQTEIEGKRQQLDEQILLLQHSKSKVLREKWLLQGIPAGTAEEEEARRRQSEEDEFRVKQLEDNIQRLEQEIQTLESEESQISAKEQIILEKLKETEKSFKDFQKGFSSTDGDAVNYISSQLPDLPILCSRTAEPSPGQDGTSRAAGVGWENVLLKEGESASNATETSGPDMTIKKPPQLSEDDIWLKSEGDNYSATLLEPAASSLSPDHKNMEIEVSVAECKSVPGITSTPHPMDHPSAFYSPPHNGLLTDHHESLDNDVAREIRYLDEVLEANCCDSAVDGTYNGTSSPEPGAVVLVGGLSPPVHEATQPEPTERTASRQAPPHIELSNSSPDPMAEAERTNGHSPSQPRDALGDSLQVPVSPSSTTSSRCSSRDGEFTLTTLKKEAKFELRAFHEDKKPSKLFEDDEHEKEQYCIRKVRPSEEMLELEKERRELIRSQAVKKNPGIAAKWWNPPQEKTIEEQLDEEHLESHKKYKERKERRAQQEQLLLQKQLQQQQQQPPSQLCTAPASSHERASMIDKAKEDIVTEQIDFSAARKQFQLMENSRQAVAKGQSTPRLFSIKPFYRPLGSVNSDKPLTNPRPPSVGGPPEDSGASAAKGQKSPGALETPSAAGSQGNTASQGKEGPYSEPSKRGPLSKLWAEDGEFTSARAVLTVVKDDDHGILDQFSRSVNVSLTQEELDSGLDELSVRSQDTTVLETLSNDFSMDNISDSGASNETTNALQENSLADFSLPQTPQTDNPSEGRGEGVSKSFSDHGFYSPSSTLGDSPLVDDPLEYQAGLLVQNAIQQAIAEQVDKAVSKTSRDGAEQQGPEATVEEAEAAAFGSEKPQSMFEPPQVSSPVQEKRDVLPKILPAEDRALRERGPPQPLPAVQPSGPINMEETRPEGSYFSKYSEAAELRSTASLLATQESDVMVGPFKLRSRKQRTLSMIEEEIRAAQEREEELKRQRQVLQSTQSPRTKNAPSLPSRTCYKTAPGKIEKVKPPPSPTTEGPSLQPDLAPEEAAGTQRPKNLMQTLMEDYETHKSKRRERMDDSSYTSKLLSCKVTSEVLEATRVNRRKSALALRWEAGIYANQEEEDNE.

Disordered stretches follow at residues 178–197 and 304–396; these read ESAS…KKPP and YNGT…SSRD. The span at 179-189 shows a compositional bias: polar residues; the sequence is SASNATETSGP. 3 positions are modified to phosphoserine: serine 322, serine 352, and serine 383. The span at 380-392 shows a compositional bias: low complexity; that stretch reads VPVSPSSTTSSRC. Lysine 405 participates in a covalent cross-link: Glycyl lysine isopeptide (Lys-Gly) (interchain with G-Cter in SUMO1); alternate. Residue lysine 405 forms a Glycyl lysine isopeptide (Lys-Gly) (interchain with G-Cter in SUMO2); alternate linkage. Residues 444–521 adopt a coiled-coil conformation; sequence EEMLELEKER…QKQLQQQQQQ (78 aa). 2 disordered regions span residues 483–544 and 566–662; these read EQLD…DKAK and NSRQ…SKLW. Residues 490–505 show a composition bias toward basic and acidic residues; it reads LESHKKYKERKERRAQ. The span at 506 to 521 shows a compositional bias: low complexity; the sequence is QEQLLLQKQLQQQQQQ. The segment covering 522-531 has biased composition (polar residues); the sequence is PPSQLCTAPA. Over residues 533–544 the composition is skewed to basic and acidic residues; the sequence is SHERASMIDKAK. A compositionally biased stretch (polar residues) spans 566 to 579; that stretch reads NSRQAVAKGQSTPR. A phosphoserine mark is found at serine 567 and serine 624. The segment covering 633–643 has biased composition (polar residues); the sequence is AAGSQGNTASQ. Phosphoserine occurs at positions 692, 696, and 748. Residues 745-763 show a composition bias toward polar residues; it reads QENSLADFSLPQTPQTDNP. Residues 745 to 794 are disordered; it reads QENSLADFSLPQTPQTDNPSEGRGEGVSKSFSDHGFYSPSSTLGDSPLVD. Residue threonine 757 is modified to Phosphothreonine. Positions 797–810 are PKA-RII subunit binding domain; sequence LEYQAGLLVQNAIQ. Over residues 817–829 the composition is skewed to basic and acidic residues; the sequence is VDKAVSKTSRDGA. Positions 817 to 907 are disordered; it reads VDKAVSKTSR…GPINMEETRP (91 aa). Serine 862 carries the phosphoserine modification. Basic and acidic residues predominate over residues 865–886; that stretch reads QEKRDVLPKILPAEDRALRERG. A coiled-coil region spans residues 941-979; the sequence is KLRSRKQRTLSMIEEEIRAAQEREEELKRQRQVLQSTQS. Phosphoserine is present on residues serine 951, serine 979, serine 1009, and serine 1016. Positions 962-1035 are disordered; sequence EREEELKRQR…AAGTQRPKNL (74 aa). Over residues 976–990 the composition is skewed to polar residues; it reads STQSPRTKNAPSLPS.

In terms of tissue distribution, expressed in infantile heart and muscle, and fibroblasts.

It localises to the apical cell membrane. Functionally, binds to regulatory subunit (RII) of protein kinase A. May be involved in establishing polarity in signaling systems or in integrating PKA-RII isoforms with downstream effectors to capture, amplify and focus diffuse, trans-cellular signals carried by cAMP. Binds to and modulates the structure of the actin cytoskeleton. In Homo sapiens (Human), this protein is PALM2-AKAP2 fusion protein.